We begin with the raw amino-acid sequence, 461 residues long: Asparagine--tRNA ligase (461 aa).

The protein belongs to the class-II aminoacyl-tRNA synthetase family. Homodimer.

It is found in the cytoplasm. The enzyme catalyses tRNA(Asn) + L-asparagine + ATP = L-asparaginyl-tRNA(Asn) + AMP + diphosphate + H(+). This is Asparagine--tRNA ligase from Geobacter sulfurreducens (strain ATCC 51573 / DSM 12127 / PCA).